The primary structure comprises 437 residues: Epsilon-sarcoglycan (437 aa).

Residues 1 to 317 (MQLPRWWELG…LKSRDYYTDF (317 aa)) are Extracellular-facing. N-linked (GlcNAc...) asparagine glycosylation occurs at asparagine 200. Residues 318–338 (LITLAVPSAVALVLFLILAYI) traverse the membrane as a helical segment. The Cytoplasmic portion of the chain corresponds to 339–437 (MCCRREGVEK…QQQTTGKWYP (99 aa)).

The protein belongs to the sarcoglycan alpha/epsilon family. Post-translationally, N-glycosylated. In terms of processing, ubiquitinated, leading to its degradation by the proteasome.

The protein resides in the cell membrane. The protein localises to the sarcolemma. It localises to the cytoplasm. It is found in the cytoskeleton. Its subcellular location is the cell projection. The protein resides in the dendrite. The protein localises to the golgi apparatus. In terms of biological role, component of the sarcoglycan complex, a subcomplex of the dystrophin-glycoprotein complex which forms a link between the F-actin cytoskeleton and the extracellular matrix. The protein is Epsilon-sarcoglycan of Macaca fascicularis (Crab-eating macaque).